The primary structure comprises 250 residues: Putative inactive flavonol synthase 2 (250 aa).

Residues 171–250 (TEYVMRINNY…EQWKVQECVA (80 aa)) enclose the Fe2OG dioxygenase domain. Fe cation-binding residues include His195 and Asp197.

Belongs to the iron/ascorbate-dependent oxidoreductase family.

This chain is Putative inactive flavonol synthase 2 (FLS2), found in Arabidopsis thaliana (Mouse-ear cress).